A 229-amino-acid chain; its full sequence is Aspartate-rich protein 1 (229 aa).

A disordered region spans residues 84 to 106 (SEEDNDDAKILPSPVQGSSEDNL).

The polypeptide is Aspartate-rich protein 1 (DRICH1) (Homo sapiens (Human)).